The chain runs to 420 residues: Serine palmitoyltransferase (420 aa).

A compositionally biased stretch (polar residues) spans 1–21 (MKHNLQDNLQGEQMANTNSNG). The interval 1-25 (MKHNLQDNLQGEQMANTNSNGGKKP) is disordered. Pyridoxal 5'-phosphate-binding positions include 132–133 (GM), His-233, Thr-261, and Ser-263. The residue at position 264 (Lys-264) is an N6-(pyridoxal phosphate)lysine.

This sequence belongs to the class-II pyridoxal-phosphate-dependent aminotransferase family. In terms of assembly, homodimer. The cofactor is pyridoxal 5'-phosphate.

It is found in the cytoplasm. The protein resides in the cell inner membrane. It carries out the reaction L-serine + hexadecanoyl-CoA + H(+) = 3-oxosphinganine + CO2 + CoA. Its pathway is lipid metabolism; sphingolipid metabolism. Its activity is regulated as follows. Significantly inhibited by palmitoyl-CoA concentrations greater than 100 uM. In terms of biological role, catalyzes the condensation of L-serine with palmitoyl-CoA (hexadecanoyl-CoA) to produce 3-oxosphinganine. This chain is Serine palmitoyltransferase, found in Bacteriovorax stolpii (Bdellovibrio stolpii).